A 615-amino-acid polypeptide reads, in one-letter code: Chaperone protein HscA (615 aa).

This sequence belongs to the heat shock protein 70 family.

Functionally, chaperone involved in the maturation of iron-sulfur cluster-containing proteins. Has a low intrinsic ATPase activity which is markedly stimulated by HscB. Involved in the maturation of IscU. This is Chaperone protein HscA from Xenorhabdus nematophila (strain ATCC 19061 / DSM 3370 / CCUG 14189 / LMG 1036 / NCIMB 9965 / AN6).